Here is a 171-residue protein sequence, read N- to C-terminus: 3-hydroxydecanoyl-[acyl-carrier-protein] dehydratase (171 aa).

His70 is a catalytic residue.

This sequence belongs to the thioester dehydratase family. FabA subfamily. As to quaternary structure, homodimer.

It localises to the cytoplasm. It catalyses the reaction a (3R)-hydroxyacyl-[ACP] = a (2E)-enoyl-[ACP] + H2O. The enzyme catalyses (3R)-hydroxydecanoyl-[ACP] = (2E)-decenoyl-[ACP] + H2O. It carries out the reaction (2E)-decenoyl-[ACP] = (3Z)-decenoyl-[ACP]. The protein operates within lipid metabolism; fatty acid biosynthesis. In terms of biological role, necessary for the introduction of cis unsaturation into fatty acids. Catalyzes the dehydration of (3R)-3-hydroxydecanoyl-ACP to E-(2)-decenoyl-ACP and then its isomerization to Z-(3)-decenoyl-ACP. Can catalyze the dehydratase reaction for beta-hydroxyacyl-ACPs with saturated chain lengths up to 16:0, being most active on intermediate chain length. This is 3-hydroxydecanoyl-[acyl-carrier-protein] dehydratase from Ectopseudomonas mendocina (strain ymp) (Pseudomonas mendocina).